Here is a 395-residue protein sequence, read N- to C-terminus: L-methionine gamma-lyase (395 aa).

Pyridoxal 5'-phosphate-binding positions include Y56–R58 and G86–M87. Position 111 (Y111) interacts with substrate. Residue S206 to T208 coordinates pyridoxal 5'-phosphate. N6-(pyridoxal phosphate)lysine is present on K209. Position 373 (R373) interacts with substrate.

The protein belongs to the trans-sulfuration enzymes family. L-methionine gamma-lyase subfamily. In terms of assembly, homotetramer. The cofactor is pyridoxal 5'-phosphate.

It catalyses the reaction L-methionine + H2O = methanethiol + 2-oxobutanoate + NH4(+). It carries out the reaction L-homocysteine + H2O = 2-oxobutanoate + hydrogen sulfide + NH4(+) + H(+). Functionally, catalyzes the alpha,gamma-elimination of L-methionine to produce methanethiol, 2-oxobutanoate and ammonia; methanethiol (methyl mercaptan) is considered to be one of the main causes of the oral malodor associated with periodontitis. Also displays homocysteine desulfhydrase activity, degrading homocysteine to produce hydrogen sulfide, 2-oxobutanoate and ammonia. L-cysteine and S-methyl-L-cysteine are poor substrates for the enzyme. In terms of biological role, plays an important role in the resistance of F.nucleatum to the antibacterial agent 3-chloro-DL-alanine (3CA), thanks to its 3CA chloride-lyase (deaminating) activity. In Fusobacterium nucleatum subsp. polymorphum (Fusobacterium polymorphum), this protein is L-methionine gamma-lyase.